A 354-amino-acid polypeptide reads, in one-letter code: MVKVINNFVKVNQYDRPGLKLAAVKGIVMHWTATPGASALNERNYFNGTCIADKRYASAHYFVDRHEAQHIIPDHEVAYHAHDQNRCYVSFLKPNANTTALGVEMCVEKDGTIHEETIRNAAELVADLCKTYGLSADRIVRHYDVTNKGCPTPWVRDAGQLSAFRKRVDSLLGRKTVSVSAASTSQTSSSSGIILKKGMSGSHVKKLQTRLVAAGFSLPKYGADGSYGDETVHAVVSLQKKAGIKADGIYGPSTEKALSAAEASAAGKSKTWTLPDGIYKVKNPLMKGTAVTQIQTALAALYYYPDKGAKNNGIDGYYGMKTANAVKRFQLMYGLGADGIYGPKTKAKMLSLLK.

An N-terminal signal peptide occupies residues 1-39 (MVKVINNFVKVNQYDRPGLKLAAVKGIVMHWTATPGASA). Positions 40–152 (LNERNYFNGT…YDVTNKGCPT (113 aa)) constitute an N-acetylmuramoyl-L-alanine amidase domain.

Belongs to the N-acetylmuramoyl-L-alanine amidase 2 family.

Its subcellular location is the secreted. The catalysed reaction is Hydrolyzes the link between N-acetylmuramoyl residues and L-amino acid residues in certain cell-wall glycopeptides.. The chain is Probable N-acetylmuramoyl-L-alanine amidase from Bacillus licheniformis.